Reading from the N-terminus, the 225-residue chain is Uridylate kinase (225 aa).

Residue 9-10 participates in ATP binding; the sequence is GS. Position 44 (Gly-44) interacts with UMP. Residues Gly-45 and Arg-49 each contribute to the ATP site. UMP contacts are provided by residues Asp-66 and 114–120; that span reads THPGHTT. Thr-140, Asn-141, Tyr-146, and Asp-149 together coordinate ATP.

The protein belongs to the UMP kinase family. As to quaternary structure, homohexamer.

It is found in the cytoplasm. The catalysed reaction is UMP + ATP = UDP + ADP. The protein operates within pyrimidine metabolism; CTP biosynthesis via de novo pathway; UDP from UMP (UMPK route): step 1/1. With respect to regulation, inhibited by UTP. Its function is as follows. Catalyzes the reversible phosphorylation of UMP to UDP. This is Uridylate kinase from Thermococcus sibiricus (strain DSM 12597 / MM 739).